The primary structure comprises 283 residues: Pantothenate synthetase (283 aa).

30 to 37 (MGNLHDGH) contacts ATP. His-37 (proton donor) is an active-site residue. Position 61 (Gln-61) interacts with (R)-pantoate. Gln-61 is a beta-alanine binding site. Residue 149–152 (GEKD) participates in ATP binding. Gln-155 provides a ligand contact to (R)-pantoate. 186-189 (LSSR) is an ATP binding site.

The protein belongs to the pantothenate synthetase family. As to quaternary structure, homodimer.

Its subcellular location is the cytoplasm. The catalysed reaction is (R)-pantoate + beta-alanine + ATP = (R)-pantothenate + AMP + diphosphate + H(+). It functions in the pathway cofactor biosynthesis; (R)-pantothenate biosynthesis; (R)-pantothenate from (R)-pantoate and beta-alanine: step 1/1. Functionally, catalyzes the condensation of pantoate with beta-alanine in an ATP-dependent reaction via a pantoyl-adenylate intermediate. The polypeptide is Pantothenate synthetase (Escherichia coli O127:H6 (strain E2348/69 / EPEC)).